A 142-amino-acid polypeptide reads, in one-letter code: MKTFSAKPHEVKREWFVVDATDKVLGRLATEIARRLRGKHKAIYTPHIDTGDFVVVTNVDKITVTGNKAEDKKYFRHSGYPGGIYETNFKKMQQRFPGRALETAVKGMLPKGPLGYAMLKKLKCYAGEQHPHTAQQPKALEI.

It belongs to the universal ribosomal protein uL13 family. In terms of assembly, part of the 50S ribosomal subunit.

Functionally, this protein is one of the early assembly proteins of the 50S ribosomal subunit, although it is not seen to bind rRNA by itself. It is important during the early stages of 50S assembly. This Dechloromonas aromatica (strain RCB) protein is Large ribosomal subunit protein uL13.